The chain runs to 268 residues: Putative pyruvate, phosphate dikinase regulatory protein (268 aa).

147–154 (GLSRTSKT) lines the ADP pocket.

It belongs to the pyruvate, phosphate/water dikinase regulatory protein family. PDRP subfamily.

It catalyses the reaction N(tele)-phospho-L-histidyl/L-threonyl-[pyruvate, phosphate dikinase] + ADP = N(tele)-phospho-L-histidyl/O-phospho-L-threonyl-[pyruvate, phosphate dikinase] + AMP + H(+). It carries out the reaction N(tele)-phospho-L-histidyl/O-phospho-L-threonyl-[pyruvate, phosphate dikinase] + phosphate + H(+) = N(tele)-phospho-L-histidyl/L-threonyl-[pyruvate, phosphate dikinase] + diphosphate. Its function is as follows. Bifunctional serine/threonine kinase and phosphorylase involved in the regulation of the pyruvate, phosphate dikinase (PPDK) by catalyzing its phosphorylation/dephosphorylation. This is Putative pyruvate, phosphate dikinase regulatory protein from Clostridium beijerinckii (strain ATCC 51743 / NCIMB 8052) (Clostridium acetobutylicum).